A 166-amino-acid chain; its full sequence is Probable chemoreceptor glutamine deamidase CheD (166 aa).

Belongs to the CheD family.

It carries out the reaction L-glutaminyl-[protein] + H2O = L-glutamyl-[protein] + NH4(+). Its function is as follows. Probably deamidates glutamine residues to glutamate on methyl-accepting chemotaxis receptors (MCPs), playing an important role in chemotaxis. The chain is Probable chemoreceptor glutamine deamidase CheD from Clostridium acetobutylicum (strain ATCC 824 / DSM 792 / JCM 1419 / IAM 19013 / LMG 5710 / NBRC 13948 / NRRL B-527 / VKM B-1787 / 2291 / W).